Consider the following 572-residue polypeptide: Sialate:O-sulfotransferase 1 (572 aa).

Residues 1–14 (MAKPFFRLQKFLRR) lie on the Cytoplasmic side of the membrane. Residues 15-35 (TQFLLLFLTAAYLMTGSLLLL) traverse the membrane as a helical; Signal-anchor for type II membrane protein segment. Residues 36–572 (QRARVALPQA…AGLPREYVPR (537 aa)) lie on the Extracellular side of the membrane. The N-linked (GlcNAc...) asparagine glycan is linked to Asn-105. The tract at residues 116–135 (HLTSDPQGPPTLGPEASGPA) is disordered. 2 consecutive WSC domains span residues 139–231 (QGNY…YSVG) and 242–337 (TATY…DTRC). Asn-254 and Asn-345 each carry an N-linked (GlcNAc...) asparagine glycan.

This sequence belongs to the WSCD family.

It is found in the golgi apparatus membrane. It carries out the reaction a ganglioside GM1b + 3'-phosphoadenylyl sulfate = an 8-O-sulfo-ganglioside GM1b + adenosine 3',5'-bisphosphate + H(+). Its function is as follows. Sialate:O-sulfotransferase which catalyzes 8-O-sulfation at the Sia-glycan level using 3'-phosphoadenosine 5'-phosphosulfate (PAPS) as a donor, forming 8-O-sulfated Sia (Sia8S)-glycans. Displays selectivity toward glycolipids such as GM1 gangliosides. This Rattus norvegicus (Rat) protein is Sialate:O-sulfotransferase 1 (Wscd1).